The chain runs to 1496 residues: Rap guanine nucleotide exchange factor 2 (1496 aa).

Disordered regions lie at residues 40–59 and 68–101; these read HVSS…SSSL and SEAG…SDPL. Over residues 83–94 the composition is skewed to acidic residues; the sequence is VDSEDDDDEEDI. Residue 135-254 coordinates a nucleoside 3',5'-cyclic phosphate; that stretch reads AFANMTMSVR…VEEEGEIVMV (120 aa). Positions 267–380 constitute an N-terminal Ras-GEF domain; the sequence is KGHIVIKGTS…RLLNIACAAK (114 aa). One can recognise a PDZ domain in the interval 385–470; it reads LMTLTKPSRE…ITVKTNLFVF (86 aa). S501 is modified (phosphoserine). One can recognise a Ras-associating domain in the interval 606–692; the sequence is PDQVLRVFKA…GRYYLKNNME (87 aa). A Phosphothreonine; by PLK2 modification is found at T644. A Ras-GEF domain is found at 717–944; that stretch reads STVEVATQLS…SQGSANATVL (228 aa). S806 carries the phosphoserine; by PLK2 modification. Position 930 is a phosphoserine (S930). A phosphoserine; by PLK2 mark is found at S933 and S1022. Residues 1002 to 1051 form a disordered region; sequence PATSTLPKNPGDKKPVKSETSPVAPRAGPQQKVQPQQPLAQPQPPHKVSQ. Positions 1030-1041 are enriched in low complexity; that stretch reads PQQKVQPQQPLA. Phosphoserine is present on residues S1079, S1088, S1094, S1115, S1119, and S1158. The interval 1093-1159 is disordered; the sequence is GSLERHRKQA…RSSIVSNSSF (67 aa). Low complexity-rich tracts occupy residues 1110 to 1124 and 1140 to 1159; these read SSQL…QSSP and SDSG…NSSF. Position 1175 is a phosphoserine; by PLK2 (S1175). Disordered stretches follow at residues 1224 to 1256, 1303 to 1369, and 1390 to 1496; these read STEE…SGSH, STKY…EEAK, and RKEG…VSAV. Over residues 1227–1237 the composition is skewed to basic and acidic residues; sequence ELSHDQGDRAS. Polar residues-rich tracts occupy residues 1246–1256 and 1306–1330; these read GSWTSCSSGSH and YNRQ…SSTG. Low complexity predominate over residues 1440 to 1455; the sequence is PTEAPAPGQTPPAAAA. Acidic residues predominate over residues 1485-1496; the sequence is AEEDEDEQVSAV.

The protein belongs to the RAPGEF2 family. Found in a complex, at least composed of KIDINS220, MAGI2, NTRK1 and RAPGEF2; the complex is mainly formed at late endosomes in a neuronal growth factor (NGF)-dependent manner. Interacts (via C-terminal domain) with NEDD4 (via WW domains); this interaction leads to ubiquitination and degradation via the proteasome pathway in a cAMP-independent manner. Interacts with MAGI1 (via PDZ domain). Interacts with ADRB1 (via C-terminal PDZ motif); the interaction is direct. Interacts (via Ras-associating domain) with RAP1A (via GTP-bound active form). Interacts weakly with HRAS (via GDP- and GTP-bound forms). Interacts (via C-terminal domain) with MAGI2 (via PDZ and WW domains). Interacts with CDH1, CTNNB1 and TJP1. Post-translationally, ubiquitinated by NEDD4, leading to proteasomal degradation. In terms of processing, phosphorylation by PLK2 promotes its activity. As to expression, expressed in all layers of the cerebral cortex, hippocampus and cerebellum. Expressed in the cortical plate, cingulate cortex and the subventricular zone. Expressed in neurons and endocrine cells (at protein level). Expressed in melanoma cells.

It localises to the cytoplasm. It is found in the perinuclear region. The protein localises to the cell membrane. Its subcellular location is the late endosome. The protein resides in the cell junction. Functionally, functions as a guanine nucleotide exchange factor (GEF), which activates Rap and Ras family of small GTPases by exchanging bound GDP for free GTP in a cAMP-dependent manner. Serves as a link between cell surface receptors and Rap/Ras GTPases in intracellular signaling cascades. Also acts as an effector for Rap1 by direct association with Rap1-GTP thereby leading to the amplification of Rap1-mediated signaling. Shows weak activity on HRAS. It is controversial whether RAPGEF2 binds cAMP and cGMP or not. Its binding to ligand-activated beta-1 adrenergic receptor ADRB1 leads to the Ras activation through the G(s)-alpha signaling pathway. Involved in the cAMP-induced Ras and Erk1/2 signaling pathway that leads to sustained inhibition of long term melanogenesis by reducing dendrite extension and melanin synthesis. Also provides inhibitory signals for cell proliferation of melanoma cells and promotes their apoptosis in a cAMP-independent nanner. Regulates cAMP-induced neuritogenesis by mediating the Rap1/B-Raf/ERK signaling through a pathway that is independent on both PKA and RAPGEF3/RAPGEF4. Involved in neuron migration and in the formation of the major forebrain fiber connections forming the corpus callosum, the anterior commissure and the hippocampal commissure during brain development. Involved in neuronal growth factor (NGF)-induced sustained activation of Rap1 at late endosomes and in brain-derived neurotrophic factor (BDNF)-induced axon outgrowth of hippocampal neurons. Plays a role in the regulation of embryonic blood vessel formation and in the establishment of basal junction integrity and endothelial barrier function. May be involved in the regulation of the vascular endothelial growth factor receptor KDR and cadherin CDH5 expression at allantois endothelial cell-cell junctions. This Mus musculus (Mouse) protein is Rap guanine nucleotide exchange factor 2 (Rapgef2).